The chain runs to 612 residues: MESLIVLINTIQRACTVVGDHGGDSNALSSLWEALPSVAVVGGQSSGKSSVLESIVGRDFLPRGSGIVTRRPLVLQLHKTENGTEDNAEFLHLTNKKFTNFSLVRKEIEDETDRITGKNKQISSIPIHLSIFSPNVVNLTLIDLPGLTKVAVEGQPETIVEDIESMVRSYVEKPNCLILAISPANQDIATSDAMKLAKEVDPIGDRTFGVLTKLDLMDKGTNALDVINGRSYKLKYPWVGIVNRSQADINKNVDMMVARRKEREYFETSPDYGHLATRMGSEYLAKLLSKLLESVIRSRIPSILSLINNNIEELERELDQLGRPIAIDAGAQLYTILGMCRAFEKIFKEHLDGGRPGGARIYGIFDYNLPTAIKKLPFDRHLSLQSVKRIVSESDGYQPHLIAPELGYRRLIEGSLNHFRGPAEASVNAIHLILKELVRKAIAETEELKRFPSLQIELVAAANSSLDKFREESMKSVLRLVDMESSYLTVDFFRKLHVESQNMSLSSPTSAIDQYGDGHFRKIASNVAAYIKMVAETLVNTIPKAVVHCQVRQAKLSLLNYFYAQISQSQGKRLGQLLDENPALMERRMQCAKRLELYKKARDEIDAAVWVR.

Position 1 is an N-acetylmethionine (methionine 1). The region spanning 32 to 301 (WEALPSVAVV…LESVIRSRIP (270 aa)) is the Dynamin-type G domain. Residues 42–49 (GGQSSGKS) form a G1 motif region. 45–50 (SSGKSS) contacts GTP. Residues 68–70 (VTR) are G2 motif. A G3 motif region spans residues 143–146 (DLPG). The G4 motif stretch occupies residues 212-215 (TKLD). GTP contacts are provided by residues 213–218 (KLDLMD) and 243–246 (NRSQ). The interval 242–245 (VNRS) is G5 motif. One can recognise a GED domain in the interval 520-612 (FRKIASNVAA…DEIDAAVWVR (93 aa)).

It belongs to the TRAFAC class dynamin-like GTPase superfamily. Dynamin/Fzo/YdjA family. Forms homodimer and may homooligomerize and heterooligomerize to form the phragmoplastin complex. Binds to PHIP1.

The protein localises to the cytoplasm. It is found in the cytoskeleton. It carries out the reaction GTP + H2O = GDP + phosphate + H(+). Functionally, putative microtubule-associated force-producing protein. Has a GTPase activity. The sequence is that of Phragmoplastin DRP1D from Arabidopsis thaliana (Mouse-ear cress).